Reading from the N-terminus, the 253-residue chain is Small ribosomal subunit protein uS3 (253 aa).

Residues 39-107 (VRRALKKRLY…EVHLNIVEIR (69 aa)) enclose the KH type-2 domain. Positions 215 to 253 (LDKRLAGESGPAGEGGGRERGDRPDRGPRRERRGEPSNA) are disordered. A compositionally biased stretch (basic and acidic residues) spans 230–253 (GGRERGDRPDRGPRRERRGEPSNA).

This sequence belongs to the universal ribosomal protein uS3 family. In terms of assembly, part of the 30S ribosomal subunit. Forms a tight complex with proteins S10 and S14.

Its function is as follows. Binds the lower part of the 30S subunit head. Binds mRNA in the 70S ribosome, positioning it for translation. This is Small ribosomal subunit protein uS3 from Phenylobacterium zucineum (strain HLK1).